The chain runs to 59 residues: MFTVFLLVVLTITVVSFPSDRASDGRDDEAKDERSDMYKSKRNGRCCHPACGKHFSCGR.

An N-terminal signal peptide occupies residues 1-16 (MFTVFLLVVLTITVVS). The propeptide occupies 17 to 42 (FPSDRASDGRDDEAKDERSDMYKSKR). Disulfide bonds link C46/C51 and C47/C57. C57 is modified (cysteine amide).

Belongs to the conotoxin A superfamily. Expressed by the venom duct.

Its subcellular location is the secreted. Its function is as follows. Alpha-conotoxins act on postsynaptic membranes, they bind to the nicotinic acetylcholine receptors (nAChR) and thus inhibit them. This toxin blocks the rat muscle nAChRs alpha-1-beta-1-gamma-delta (CHRNA1-CHRNB1-CHRNG-CHRND) (IC(50)=5.7 nM) and the rat neuronal nAChR alpha-3-beta-2/CHRNA3-CHRNB2 (IC(50)=2060 nM). In vivo, intramuscular injection into zebrafish produces rapid flaccid paralysis. This is Alpha-conotoxin CIA from Conus catus (Cat cone).